A 367-amino-acid chain; its full sequence is MEAEVINQLNNTLNDLEKRSEDIRVYMDYQGKKDRLEEVIGLSEDPELWNDPKRAQEIGKERKILEGIVLTLDNIASGIEDNRMLIEMTVEENDEEGFAAVQEDVAGLEKQMADLEFKRMFNQPADPNNCFIDITAGAGGTEAEDWAGMLFRMYSRYAERKGFRIEILEEDDGEIAGINRATIRVEGEYAYGLLRTETGVHRLVRYSPFDSNNKRHTSFASVFVYPEIDDSIEIEINPADLRIDTYRASGAGGQHINKTDSAVRITHEPTGIVVQCQNDRSQHANKAAAMEMLKSKLYELEMRKRNEEKQALEEGKSDVGWGSQIRSYVLDSSRIKDLRTGYEVGNTKAVLDGDLDGFIEASLKQGV.

N5-methylglutamine is present on Q254.

The protein belongs to the prokaryotic/mitochondrial release factor family. Post-translationally, methylated by PrmC. Methylation increases the termination efficiency of RF2.

It is found in the cytoplasm. Its function is as follows. Peptide chain release factor 2 directs the termination of translation in response to the peptide chain termination codons UGA and UAA. This Neisseria meningitidis serogroup B (strain ATCC BAA-335 / MC58) protein is Peptide chain release factor 2.